A 221-amino-acid chain; its full sequence is Ribosomal RNA small subunit methyltransferase Nep1 (221 aa).

S-adenosyl-L-methionine-binding positions include Gly-174, Gly-179, and 196-201 (VGDEPL).

The protein belongs to the class IV-like SAM-binding methyltransferase superfamily. RNA methyltransferase NEP1 family. In terms of assembly, homodimer.

It catalyses the reaction a pseudouridine in rRNA + S-adenosyl-L-methionine = an N(1)-methylpseudouridine in rRNA + S-adenosyl-L-homocysteine + H(+). Its function is as follows. Methyltransferase involved in ribosomal biogenesis. Specifically catalyzes the N1-methylation of the pseudouridine corresponding to position 914 in M.jannaschii 16S rRNA. This Pyrobaculum neutrophilum (strain DSM 2338 / JCM 9278 / NBRC 100436 / V24Sta) (Thermoproteus neutrophilus) protein is Ribosomal RNA small subunit methyltransferase Nep1.